A 358-amino-acid chain; its full sequence is Molybdenum import ATP-binding protein ModC 2 (358 aa).

In terms of domain architecture, ABC transporter spans 1 to 234; it reads MPEQGIEAQL…PRLPLNHPDE (234 aa). 35 to 42 contributes to the ATP binding site; that stretch reads GRSGSGKT. One can recognise a Mop domain in the interval 293-358; that stretch reads NSSILNILRV…AQIKSVALME (66 aa).

Belongs to the ABC transporter superfamily. Molybdate importer (TC 3.A.1.8) family. As to quaternary structure, the complex is composed of two ATP-binding proteins (ModC), two transmembrane proteins (ModB) and a solute-binding protein (ModA).

Its subcellular location is the cell inner membrane. The catalysed reaction is molybdate(out) + ATP + H2O = molybdate(in) + ADP + phosphate + H(+). In terms of biological role, part of the ABC transporter complex ModABC involved in molybdenum import. Responsible for energy coupling to the transport system. The polypeptide is Molybdenum import ATP-binding protein ModC 2 (Azotobacter vinelandii).